We begin with the raw amino-acid sequence, 786 residues long: Myosin light chain kinase 3 (786 aa).

Residue Ser-155 is modified to Phosphoserine. Disordered stretches follow at residues 233–258 (EALD…SEDT), 279–315 (RMSQ…IHSD), and 333–443 (ELFE…GRRV). Positions 279 to 293 (RMSQSAGEGTSSSKP) are enriched in polar residues. A phosphoserine mark is found at Ser-341 and Ser-422. In terms of domain architecture, Protein kinase spans 482–737 (VSQHEVLGGG…ATQCLKHEWL (256 aa)). ATP is bound by residues 488–496 (LGGGRFGQV) and Lys-511. Residue Asp-603 is the Proton acceptor of the active site.

This sequence belongs to the protein kinase superfamily. CAMK Ser/Thr protein kinase family. Requires Mg(2+) as cofactor. In terms of processing, phosphorylated on serine residues. As to expression, expressed in cardiomyocytes (at protein level). Up-regulated in heart after experimental myocardial infarction at the mRNA level.

It is found in the cytoplasm. The catalysed reaction is L-seryl-[myosin light chain] + ATP = O-phospho-L-seryl-[myosin light chain] + ADP + H(+). It carries out the reaction L-threonyl-[myosin light chain] + ATP = O-phospho-L-threonyl-[myosin light chain] + ADP + H(+). Functionally, calmodulin-dependent kinase that phosphorylates MYL2 in vitro. Promotes sarcomere formation in cardiomyocytes. Increases cardiomyocyte contractility. This Rattus norvegicus (Rat) protein is Myosin light chain kinase 3 (Mylk3).